A 290-amino-acid chain; its full sequence is Carbonic anhydrase-related protein (290 aa).

A disordered region spans residues 1–26 (MADLSFIEDTVAFPEKEEDEEEEEEG). Ser-5 is subject to Phosphoserine. Residues 16 to 26 (KEEDEEEEEEG) show a composition bias toward acidic residues. The Alpha-carbonic anhydrase domain occupies 27–289 (VEWGYEEGVE…LSDRVIRAAF (263 aa)). Residue His-87 is the Proton donor/acceptor of the active site. Residues His-118 and His-141 each coordinate Zn(2+).

It belongs to the alpha-carbonic anhydrase family.

Its function is as follows. Does not have a carbonic anhydrase catalytic activity. This is Carbonic anhydrase-related protein (CA8) from Homo sapiens (Human).